A 128-amino-acid chain; its full sequence is Small ribosomal subunit protein eS8 (128 aa).

It belongs to the eukaryotic ribosomal protein eS8 family. Part of the 30S ribosomal subunit.

This Methanococcus maripaludis (strain C7 / ATCC BAA-1331) protein is Small ribosomal subunit protein eS8.